The sequence spans 477 residues: Cytochrome P450 716A1 (477 aa).

A helical transmembrane segment spans residues 2–22 (YMAIMIILFLSSILLSLLLLL). C424 contributes to the heme binding site.

Belongs to the cytochrome P450 family. Heme is required as a cofactor.

Its subcellular location is the membrane. Its function is as follows. Possesses triterpene oxidizing activity. Catalyzes the C28 hydroxylation of alpha-amyrin, beta-amyrin, and lupeol, producing uvaol, erythrodiol, and betulin, respectively. Catalyzes the C28 carboxylation of alpha- and beta-amyrin. This chain is Cytochrome P450 716A1, found in Arabidopsis thaliana (Mouse-ear cress).